The sequence spans 140 residues: Nucleoside diphosphate kinase (140 aa).

ATP is bound by residues Lys9, Phe57, Arg85, Thr91, Arg102, and Asn112. Catalysis depends on His115, which acts as the Pros-phosphohistidine intermediate.

This sequence belongs to the NDK family. In terms of assembly, homotetramer. Mg(2+) is required as a cofactor.

It localises to the cytoplasm. The catalysed reaction is a 2'-deoxyribonucleoside 5'-diphosphate + ATP = a 2'-deoxyribonucleoside 5'-triphosphate + ADP. It carries out the reaction a ribonucleoside 5'-diphosphate + ATP = a ribonucleoside 5'-triphosphate + ADP. In terms of biological role, major role in the synthesis of nucleoside triphosphates other than ATP. The ATP gamma phosphate is transferred to the NDP beta phosphate via a ping-pong mechanism, using a phosphorylated active-site intermediate. The chain is Nucleoside diphosphate kinase from Chlorobium limicola (strain DSM 245 / NBRC 103803 / 6330).